The following is a 263-amino-acid chain: Purine nucleoside phosphorylase SE_0862 (263 aa).

The Zn(2+) site is built by His79, Cys124, and His141.

Belongs to the purine nucleoside phosphorylase YfiH/LACC1 family. In terms of assembly, homodimer. It depends on Cu(2+) as a cofactor. Zn(2+) serves as cofactor.

The catalysed reaction is adenosine + phosphate = alpha-D-ribose 1-phosphate + adenine. The enzyme catalyses S-methyl-5'-thioadenosine + phosphate = 5-(methylsulfanyl)-alpha-D-ribose 1-phosphate + adenine. It catalyses the reaction inosine + phosphate = alpha-D-ribose 1-phosphate + hypoxanthine. It carries out the reaction adenosine + H2O + H(+) = inosine + NH4(+). In terms of biological role, purine nucleoside enzyme that catalyzes the phosphorolysis of adenosine and inosine nucleosides, yielding D-ribose 1-phosphate and the respective free bases, adenine and hypoxanthine. Also catalyzes the phosphorolysis of S-methyl-5'-thioadenosine into adenine and S-methyl-5-thio-alpha-D-ribose 1-phosphate. Also has adenosine deaminase activity. The chain is Purine nucleoside phosphorylase SE_0862 from Staphylococcus epidermidis (strain ATCC 12228 / FDA PCI 1200).